We begin with the raw amino-acid sequence, 317 residues long: tRNA dimethylallyltransferase (317 aa).

19–26 provides a ligand contact to ATP; the sequence is GPTASGKS. 21-26 contacts substrate; that stretch reads TASGKS. Residues 44–47 are interaction with substrate tRNA; sequence DSMQ.

It belongs to the IPP transferase family. In terms of assembly, monomer. Requires Mg(2+) as cofactor.

The catalysed reaction is adenosine(37) in tRNA + dimethylallyl diphosphate = N(6)-dimethylallyladenosine(37) in tRNA + diphosphate. In terms of biological role, catalyzes the transfer of a dimethylallyl group onto the adenine at position 37 in tRNAs that read codons beginning with uridine, leading to the formation of N6-(dimethylallyl)adenosine (i(6)A). This Methylorubrum extorquens (strain CM4 / NCIMB 13688) (Methylobacterium extorquens) protein is tRNA dimethylallyltransferase.